Reading from the N-terminus, the 194-residue chain is Holliday junction branch migration complex subunit RuvA (194 aa).

Positions 1-62 (MIGYLKGNVI…EDSLDLYGFK (62 aa)) are domain I. Residues 63–136 (TMEERELFET…KGKLKDMSGD (74 aa)) are domain II. The flexible linker stretch occupies residues 136–140 (DFEEP). The interval 141 to 194 (LPDNRNTELSDALASLGYSELEIEEALSNADIKNNGSLEENIKKALGYLGSKGS) is domain III.

This sequence belongs to the RuvA family. In terms of assembly, homotetramer. Forms an RuvA(8)-RuvB(12)-Holliday junction (HJ) complex. HJ DNA is sandwiched between 2 RuvA tetramers; dsDNA enters through RuvA and exits via RuvB. An RuvB hexamer assembles on each DNA strand where it exits the tetramer. Each RuvB hexamer is contacted by two RuvA subunits (via domain III) on 2 adjacent RuvB subunits; this complex drives branch migration. In the full resolvosome a probable DNA-RuvA(4)-RuvB(12)-RuvC(2) complex forms which resolves the HJ.

Its subcellular location is the cytoplasm. In terms of biological role, the RuvA-RuvB-RuvC complex processes Holliday junction (HJ) DNA during genetic recombination and DNA repair, while the RuvA-RuvB complex plays an important role in the rescue of blocked DNA replication forks via replication fork reversal (RFR). RuvA specifically binds to HJ cruciform DNA, conferring on it an open structure. The RuvB hexamer acts as an ATP-dependent pump, pulling dsDNA into and through the RuvAB complex. HJ branch migration allows RuvC to scan DNA until it finds its consensus sequence, where it cleaves and resolves the cruciform DNA. In Halothermothrix orenii (strain H 168 / OCM 544 / DSM 9562), this protein is Holliday junction branch migration complex subunit RuvA.